The primary structure comprises 154 residues: Large ribosomal subunit protein uL15 (154 aa).

Residues 1-44 (MKLNELGNCKGATRNRKRVGRGIGSGTGKTSGRGVKGQKSRSGV) are disordered. Residues 21 to 35 (RGIGSGTGKTSGRGV) show a composition bias toward gly residues.

It belongs to the universal ribosomal protein uL15 family. As to quaternary structure, part of the 50S ribosomal subunit.

Functionally, binds to the 23S rRNA. The polypeptide is Large ribosomal subunit protein uL15 (Bartonella quintana (strain Toulouse) (Rochalimaea quintana)).